We begin with the raw amino-acid sequence, 401 residues long: Flagellin D (401 aa).

Belongs to the bacterial flagellin family.

The protein resides in the secreted. It localises to the bacterial flagellum. Its function is as follows. Flagellin is the subunit protein which polymerizes to form the filaments of bacterial flagella. This Rhizobium meliloti (strain 1021) (Ensifer meliloti) protein is Flagellin D (flaD).